The sequence spans 611 residues: Translation initiation factor RLI1 (611 aa).

2 4Fe-4S ferredoxin-type domains span residues 7 to 31 (RVAI…SCPV) and 46 to 75 (RIAF…IINL). ABC transporter domains lie at 77-318 (TNLE…FLDG) and 345-565 (AEKS…LKNL). ATP is bound by residues 110–117 (GTNGIGKS) and 382–389 (GENGTGKT).

Belongs to the ABC transporter superfamily. ABCE family. In terms of assembly, component of the multifactor complex (MFC). The complex associates with pre-initiation complexes.

It is found in the cytoplasm. It localises to the nucleus. Its function is as follows. Component of the multifactor complex (MFC) involved in translation initiation. Required for the binding of MFC to the 40S ribosome. Required for the processing and nuclear export of the 60S and 40S ribosomal subunits. The sequence is that of Translation initiation factor RLI1 (RLI1) from Chaetomium thermophilum (strain DSM 1495 / CBS 144.50 / IMI 039719) (Thermochaetoides thermophila).